A 354-amino-acid chain; its full sequence is Uroporphyrinogen decarboxylase (354 aa).

Residues 27-31, aspartate 77, tyrosine 154, threonine 209, and histidine 327 contribute to the substrate site; that span reads RQAGR.

Belongs to the uroporphyrinogen decarboxylase family. As to quaternary structure, homodimer.

Its subcellular location is the cytoplasm. The enzyme catalyses uroporphyrinogen III + 4 H(+) = coproporphyrinogen III + 4 CO2. The protein operates within porphyrin-containing compound metabolism; protoporphyrin-IX biosynthesis; coproporphyrinogen-III from 5-aminolevulinate: step 4/4. In terms of biological role, catalyzes the decarboxylation of four acetate groups of uroporphyrinogen-III to yield coproporphyrinogen-III. The chain is Uroporphyrinogen decarboxylase from Actinobacillus succinogenes (strain ATCC 55618 / DSM 22257 / CCUG 43843 / 130Z).